The following is a 448-amino-acid chain: Ribosomal protein uS12 methylthiotransferase RimO (448 aa).

The region spanning 16 to 126 (PKISFVSLGC…VVAAVHEAVP (111 aa)) is the MTTase N-terminal domain. Residues Cys25, Cys61, Cys90, Cys157, Cys161, and Cys164 each contribute to the [4Fe-4S] cluster site. A Radical SAM core domain is found at 143 to 380 (LTPRHYAYLK…METQNGIALR (238 aa)). The 66-residue stretch at 383–448 (RAKVGKRLPV…EAYDLYGSVA (66 aa)) folds into the TRAM domain.

It belongs to the methylthiotransferase family. RimO subfamily. [4Fe-4S] cluster serves as cofactor.

It localises to the cytoplasm. It catalyses the reaction L-aspartate(89)-[ribosomal protein uS12]-hydrogen + (sulfur carrier)-SH + AH2 + 2 S-adenosyl-L-methionine = 3-methylsulfanyl-L-aspartate(89)-[ribosomal protein uS12]-hydrogen + (sulfur carrier)-H + 5'-deoxyadenosine + L-methionine + A + S-adenosyl-L-homocysteine + 2 H(+). Functionally, catalyzes the methylthiolation of an aspartic acid residue of ribosomal protein uS12. The protein is Ribosomal protein uS12 methylthiotransferase RimO of Methylobacterium radiotolerans (strain ATCC 27329 / DSM 1819 / JCM 2831 / NBRC 15690 / NCIMB 10815 / 0-1).